A 416-amino-acid chain; its full sequence is tRNA(Met) cytidine acetate ligase (416 aa).

ATP contacts are provided by residues 7 to 20 (VVEY…HLYH), glycine 101, asparagine 163, and arginine 188.

This sequence belongs to the TmcAL family.

The protein localises to the cytoplasm. It carries out the reaction cytidine(34) in elongator tRNA(Met) + acetate + ATP = N(4)-acetylcytidine(34) in elongator tRNA(Met) + AMP + diphosphate. Functionally, catalyzes the formation of N(4)-acetylcytidine (ac(4)C) at the wobble position of elongator tRNA(Met), using acetate and ATP as substrates. First activates an acetate ion to form acetyladenylate (Ac-AMP) and then transfers the acetyl group to tRNA to form ac(4)C34. The sequence is that of tRNA(Met) cytidine acetate ligase from Bacillus licheniformis (strain ATCC 14580 / DSM 13 / JCM 2505 / CCUG 7422 / NBRC 12200 / NCIMB 9375 / NCTC 10341 / NRRL NRS-1264 / Gibson 46).